Here is a 433-residue protein sequence, read N- to C-terminus: Serine--tRNA ligase (433 aa).

Position 235–237 (235–237) interacts with L-serine; it reads TSE. An ATP-binding site is contributed by 266-268; sequence RSE. Position 289 (glutamate 289) interacts with L-serine. 353–356 lines the ATP pocket; it reads EISS. Serine 388 lines the L-serine pocket.

The protein belongs to the class-II aminoacyl-tRNA synthetase family. Type-1 seryl-tRNA synthetase subfamily. Homodimer. The tRNA molecule binds across the dimer.

The protein localises to the cytoplasm. The catalysed reaction is tRNA(Ser) + L-serine + ATP = L-seryl-tRNA(Ser) + AMP + diphosphate + H(+). The enzyme catalyses tRNA(Sec) + L-serine + ATP = L-seryl-tRNA(Sec) + AMP + diphosphate + H(+). The protein operates within aminoacyl-tRNA biosynthesis; selenocysteinyl-tRNA(Sec) biosynthesis; L-seryl-tRNA(Sec) from L-serine and tRNA(Sec): step 1/1. Catalyzes the attachment of serine to tRNA(Ser). Is also able to aminoacylate tRNA(Sec) with serine, to form the misacylated tRNA L-seryl-tRNA(Sec), which will be further converted into selenocysteinyl-tRNA(Sec). This is Serine--tRNA ligase from Burkholderia thailandensis (strain ATCC 700388 / DSM 13276 / CCUG 48851 / CIP 106301 / E264).